The chain runs to 461 residues: ATP-dependent protease ATPase subunit HslU (461 aa).

Residues valine 21, 63–68 (GVGKTE), aspartate 274, glutamate 339, and arginine 411 each bind ATP.

Belongs to the ClpX chaperone family. HslU subfamily. A double ring-shaped homohexamer of HslV is capped on each side by a ring-shaped HslU homohexamer. The assembly of the HslU/HslV complex is dependent on binding of ATP.

It is found in the cytoplasm. Its function is as follows. ATPase subunit of a proteasome-like degradation complex; this subunit has chaperone activity. The binding of ATP and its subsequent hydrolysis by HslU are essential for unfolding of protein substrates subsequently hydrolyzed by HslV. HslU recognizes the N-terminal part of its protein substrates and unfolds these before they are guided to HslV for hydrolysis. The protein is ATP-dependent protease ATPase subunit HslU of Caldanaerobacter subterraneus subsp. tengcongensis (strain DSM 15242 / JCM 11007 / NBRC 100824 / MB4) (Thermoanaerobacter tengcongensis).